Reading from the N-terminus, the 445-residue chain is Inner membrane metabolite transport protein YgcS (445 aa).

Residues 1–22 are Cytoplasmic-facing; the sequence is MNTSPVRMDDLPLNRFHCRIAA. The chain crosses the membrane as a helical span at residues 23-43; the sequence is LTFGAHLTDGYVLGVIGYAII. Topologically, residues 44 to 56 are periplasmic; it reads QLTPAMQLTPFMA. Residues 57–77 traverse the membrane as a helical segment; that stretch reads GMIGGSALLGLFLGSLVLGWI. Residues 78-85 are Cytoplasmic-facing; it reads SDHIGRQK. A helical transmembrane segment spans residues 86–106; that stretch reads IFTFSFLLITLASFLQFFATT. Over 107–114 the chain is Periplasmic; that stretch reads PEHLIGLR. The chain crosses the membrane as a helical span at residues 115–135; sequence ILIGIGLGGDYSVGHTLLAEF. The Cytoplasmic segment spans residues 136–142; that stretch reads SPRRHRG. Residues 143 to 163 traverse the membrane as a helical segment; it reads ILLGAFSVVWTVGYVLASIAG. The Periplasmic portion of the chain corresponds to 164 to 175; sequence HHFISENPEAWR. A helical membrane pass occupies residues 176-196; that stretch reads WLLASAALPALLITLLRWGTP. Residues 197–253 lie on the Cytoplasmic side of the membrane; that stretch reads ESPRWLLRQGRFAEAHAIVHRYFGPHVLLGDEVVTATHKHIKTLFSSRYWRRTAFNS. The helical transmembrane segment at 254 to 274 threads the bilayer; sequence VFFVCLVIPWFVIYTWLPTIA. The Periplasmic portion of the chain corresponds to 275–286; the sequence is QTIGLEDALTAS. A helical transmembrane segment spans residues 287 to 307; the sequence is LMLNALLIVGALLGLVLTHLL. Topologically, residues 308–311 are cytoplasmic; the sequence is AHRK. A helical transmembrane segment spans residues 312 to 332; the sequence is FLLGSFLLLAATLVVMACLPS. The Periplasmic segment spans residues 333-337; sequence GSSLT. The chain crosses the membrane as a helical span at residues 338–358; sequence LLLFVLFSTTISAVSNLVGIL. Over 359-369 the chain is Cytoplasmic; that stretch reads PAESFPTDIRS. Residues 370–390 form a helical membrane-spanning segment; that stretch reads LGVGFATAMSRLGAAVSTGLL. Residues 391–400 are Periplasmic-facing; sequence PWVLAQWGMQ. Residues 401-421 traverse the membrane as a helical segment; it reads VTLLLLATVLLVGFVVTWLWA. Topologically, residues 422–445 are cytoplasmic; sequence PETKALPLVAAGNVGGANEHSVSV.

It belongs to the major facilitator superfamily. Sugar transporter (TC 2.A.1.1) family.

It is found in the cell inner membrane. The polypeptide is Inner membrane metabolite transport protein YgcS (ygcS) (Escherichia coli (strain K12)).